The chain runs to 517 residues: Maturase K (517 aa).

It belongs to the intron maturase 2 family. MatK subfamily.

The protein resides in the plastid. Its subcellular location is the chloroplast. Functionally, usually encoded in the trnK tRNA gene intron. Probably assists in splicing its own and other chloroplast group II introns. The protein is Maturase K of Paris tetraphylla.